Reading from the N-terminus, the 395-residue chain is S-adenosylmethionine synthase (395 aa).

Position 16 (His-16) interacts with ATP. Asp-18 contacts Mg(2+). Glu-44 serves as a coordination point for K(+). Positions 57 and 100 each coordinate L-methionine. The interval 100-110 (QSPDIAQGVDR) is flexible loop. Residues 167 to 169 (DAK), 233 to 234 (RF), Asp-242, 248 to 249 (RK), Ala-265, and Lys-269 contribute to the ATP site. Asp-242 is an L-methionine binding site. Lys-273 is an L-methionine binding site.

This sequence belongs to the AdoMet synthase family. In terms of assembly, homotetramer; dimer of dimers. It depends on Mg(2+) as a cofactor. K(+) is required as a cofactor.

The protein localises to the cytoplasm. It carries out the reaction L-methionine + ATP + H2O = S-adenosyl-L-methionine + phosphate + diphosphate. Its pathway is amino-acid biosynthesis; S-adenosyl-L-methionine biosynthesis; S-adenosyl-L-methionine from L-methionine: step 1/1. In terms of biological role, catalyzes the formation of S-adenosylmethionine (AdoMet) from methionine and ATP. The overall synthetic reaction is composed of two sequential steps, AdoMet formation and the subsequent tripolyphosphate hydrolysis which occurs prior to release of AdoMet from the enzyme. This is S-adenosylmethionine synthase from Burkholderia cenocepacia (strain ATCC BAA-245 / DSM 16553 / LMG 16656 / NCTC 13227 / J2315 / CF5610) (Burkholderia cepacia (strain J2315)).